Reading from the N-terminus, the 157-residue chain is 2-C-methyl-D-erythritol 2,4-cyclodiphosphate synthase (157 aa).

The a divalent metal cation site is built by aspartate 8 and histidine 10. 4-CDP-2-C-methyl-D-erythritol 2-phosphate is bound by residues 8-10 (DVH) and 34-35 (HS). Histidine 42 is a binding site for a divalent metal cation. 4-CDP-2-C-methyl-D-erythritol 2-phosphate-binding positions include 56–58 (DIG), 61–65 (FPDTD), 100–106 (AQAPKMA), 132–135 (TTEE), phenylalanine 139, and arginine 142.

This sequence belongs to the IspF family. In terms of assembly, homotrimer. A divalent metal cation serves as cofactor.

The catalysed reaction is 4-CDP-2-C-methyl-D-erythritol 2-phosphate = 2-C-methyl-D-erythritol 2,4-cyclic diphosphate + CMP. It functions in the pathway isoprenoid biosynthesis; isopentenyl diphosphate biosynthesis via DXP pathway; isopentenyl diphosphate from 1-deoxy-D-xylulose 5-phosphate: step 4/6. Involved in the biosynthesis of isopentenyl diphosphate (IPP) and dimethylallyl diphosphate (DMAPP), two major building blocks of isoprenoid compounds. Catalyzes the conversion of 4-diphosphocytidyl-2-C-methyl-D-erythritol 2-phosphate (CDP-ME2P) to 2-C-methyl-D-erythritol 2,4-cyclodiphosphate (ME-CPP) with a corresponding release of cytidine 5-monophosphate (CMP). This chain is 2-C-methyl-D-erythritol 2,4-cyclodiphosphate synthase, found in Pseudomonas entomophila (strain L48).